Here is a 214-residue protein sequence, read N- to C-terminus: Single-pass membrane and coiled-coil domain-containing protein 1 (214 aa).

A coiled-coil region spans residues 6 to 42 (TTLISLKEAMKRVDHKLQALETQFKELDFTKDNLMQK). The chain crosses the membrane as a helical span at residues 65-81 (ALQLTSMELNILYSYVI).

The protein resides in the membrane. The protein is Single-pass membrane and coiled-coil domain-containing protein 1 (SMCO1) of Homo sapiens (Human).